A 419-amino-acid polypeptide reads, in one-letter code: Imidazolonepropionase (419 aa).

His84 and His86 together coordinate Fe(3+). His84 and His86 together coordinate Zn(2+). Positions 93, 156, and 189 each coordinate 4-imidazolone-5-propanoate. Tyr156 contributes to the N-formimidoyl-L-glutamate binding site. Residue His254 participates in Fe(3+) binding. Zn(2+) is bound at residue His254. A 4-imidazolone-5-propanoate-binding site is contributed by Gln257. Asp329 is a binding site for Fe(3+). Asp329 is a Zn(2+) binding site. Positions 331 and 333 each coordinate N-formimidoyl-L-glutamate. Position 334 (Thr334) interacts with 4-imidazolone-5-propanoate.

Belongs to the metallo-dependent hydrolases superfamily. HutI family. As to quaternary structure, monomer. Forms a tightly packed homodimer in the crystal, but this seems to be an artifact of crystallization. It depends on Zn(2+) as a cofactor. Fe(3+) is required as a cofactor.

The protein localises to the cytoplasm. The catalysed reaction is 4-imidazolone-5-propanoate + H2O = N-formimidoyl-L-glutamate. Its pathway is amino-acid degradation; L-histidine degradation into L-glutamate; N-formimidoyl-L-glutamate from L-histidine: step 3/3. Functionally, catalyzes the hydrolytic cleavage of the carbon-nitrogen bond in imidazolone-5-propanoate to yield N-formimidoyl-L-glutamate. It is the third step in the universal histidine degradation pathway. In Agrobacterium fabrum (strain C58 / ATCC 33970) (Agrobacterium tumefaciens (strain C58)), this protein is Imidazolonepropionase.